The sequence spans 392 residues: Heavy metal-associated isoprenylated plant protein 6 (392 aa).

Over residues 1 to 19 (MGEKKEETATKPQGEKKPT) the composition is skewed to basic and acidic residues. The interval 1 to 22 (MGEKKEETATKPQGEKKPTDGG) is disordered. The HMA 1 domain occupies 23 to 86 (ITTVVMKLDM…KVADKIKRPV (64 aa)). 2 residues coordinate Cd(2+): Cys34 and Cys37. The disordered stretch occupies residues 89 to 157 (VSTVAPPKKE…PPPPKESTVV (69 aa)). Basic and acidic residues predominate over residues 106-145 (AEKKPSPAAEEKPAEKKPAAVEKPGEKKEEKKKEEGEKKA). Residues 153–216 (ESTVVLKTKL…YLNEKLKRTV (64 aa)) form the HMA 2 domain. Cd(2+)-binding residues include Cys164 and Cys167. The segment covering 258 to 270 (KKVDGGGEKKKEV) has biased composition (basic and acidic residues). Disordered stretches follow at residues 258–285 (KKVD…GGDG) and 350–392 (GQGY…CSVM). Positions 272 to 285 (VGGGGGGGGGGGDG) are enriched in gly residues. Residue Cys389 is modified to Cysteine methyl ester. Cys389 is lipidated: S-farnesyl cysteine. Positions 390–392 (SVM) are cleaved as a propeptide — removed in mature form.

Belongs to the HIPP family. As to expression, expressed in petioles, hypocotyls, peduncles, vascular bundles and root meristems.

It localises to the cell membrane. Functionally, heavy-metal-binding protein. Involved in the maintenance of heavy metal homeostasis and/or in detoxification. This chain is Heavy metal-associated isoprenylated plant protein 6, found in Arabidopsis thaliana (Mouse-ear cress).